Consider the following 535-residue polypeptide: CTP synthase (535 aa).

An amidoligase domain region spans residues 1–267 (MTKYIFVTGG…DKLVCEHMKL (267 aa)). A CTP-binding site is contributed by Ser13. Residue Ser13 participates in UTP binding. 14–19 (SLGKGI) serves as a coordination point for ATP. Tyr54 serves as a coordination point for L-glutamine. Asp71 provides a ligand contact to ATP. Mg(2+) is bound by residues Asp71 and Glu141. Residues 148–150 (DIE), 188–193 (KTKPTQ), and Lys224 each bind CTP. UTP is bound by residues 188–193 (KTKPTQ) and Lys224. A Glutamine amidotransferase type-1 domain is found at 292–534 (TIGLVGKYVE…VGASLQASES (243 aa)). Gly354 serves as a coordination point for L-glutamine. Residue Cys381 is the Nucleophile; for glutamine hydrolysis of the active site. L-glutamine contacts are provided by residues 382-385 (LGMQ), Glu405, and Arg462. Catalysis depends on residues His507 and Glu509.

The protein belongs to the CTP synthase family. Homotetramer.

The enzyme catalyses UTP + L-glutamine + ATP + H2O = CTP + L-glutamate + ADP + phosphate + 2 H(+). The catalysed reaction is L-glutamine + H2O = L-glutamate + NH4(+). It catalyses the reaction UTP + NH4(+) + ATP = CTP + ADP + phosphate + 2 H(+). The protein operates within pyrimidine metabolism; CTP biosynthesis via de novo pathway; CTP from UDP: step 2/2. Its activity is regulated as follows. Allosterically activated by GTP, when glutamine is the substrate; GTP has no effect on the reaction when ammonia is the substrate. The allosteric effector GTP functions by stabilizing the protein conformation that binds the tetrahedral intermediate(s) formed during glutamine hydrolysis. Inhibited by the product CTP, via allosteric rather than competitive inhibition. In terms of biological role, catalyzes the ATP-dependent amination of UTP to CTP with either L-glutamine or ammonia as the source of nitrogen. Regulates intracellular CTP levels through interactions with the four ribonucleotide triphosphates. In Bacillus pumilus (strain SAFR-032), this protein is CTP synthase.